Consider the following 208-residue polypeptide: Uracil phosphoribosyltransferase (208 aa).

5-phospho-alpha-D-ribose 1-diphosphate is bound by residues R78, R103, and 130 to 138; that span reads DPMLATGGS. Uracil-binding positions include I193 and 198 to 200; that span reads GDA. A 5-phospho-alpha-D-ribose 1-diphosphate-binding site is contributed by D199.

This sequence belongs to the UPRTase family. Requires Mg(2+) as cofactor.

The catalysed reaction is UMP + diphosphate = 5-phospho-alpha-D-ribose 1-diphosphate + uracil. It functions in the pathway pyrimidine metabolism; UMP biosynthesis via salvage pathway; UMP from uracil: step 1/1. Its activity is regulated as follows. Allosterically activated by GTP. Catalyzes the conversion of uracil and 5-phospho-alpha-D-ribose 1-diphosphate (PRPP) to UMP and diphosphate. This chain is Uracil phosphoribosyltransferase, found in Shewanella amazonensis (strain ATCC BAA-1098 / SB2B).